We begin with the raw amino-acid sequence, 639 residues long: Chaperone protein DnaK (639 aa).

A Phosphothreonine; by autocatalysis modification is found at T196. Residues 592–639 (ASSLYQTPDAGAPGASGPSAGGEPETGKKGGDGEVQNAEYEVIDGNDK) are disordered. Residues 601–613 (AGAPGASGPSAGG) are compositionally biased toward low complexity.

The protein belongs to the heat shock protein 70 family.

In terms of biological role, acts as a chaperone. This is Chaperone protein DnaK from Chlorobium limicola (strain DSM 245 / NBRC 103803 / 6330).